The sequence spans 435 residues: ATP-dependent RNA helicase RhlB (435 aa).

Residues 9–37 (QKFADLGLNPQVVEGLEKKGFEFCTPIQA) carry the Q motif motif. In terms of domain architecture, Helicase ATP-binding spans 40–219 (LPVLLSGQDI…FEHMHNPEHV (180 aa)). 53-60 (AQTGTGKT) contributes to the ATP binding site. A DEAD box motif is present at residues 165–168 (DEAD). Residues 245–390 (ALLQTLIEEE…VSDYDSSALI (146 aa)) form the Helicase C-terminal domain. Residues 395–435 (APVRTPSARNQQRRTNTGGARSGDRKSNNRRPRQPRQHKEA) are disordered. Polar residues predominate over residues 401–413 (SARNQQRRTNTGG). Positions 422–435 (NNRRPRQPRQHKEA) are enriched in basic residues.

The protein belongs to the DEAD box helicase family. RhlB subfamily. Component of the RNA degradosome, which is a multiprotein complex involved in RNA processing and mRNA degradation.

It localises to the cytoplasm. The enzyme catalyses ATP + H2O = ADP + phosphate + H(+). In terms of biological role, DEAD-box RNA helicase involved in RNA degradation. Has RNA-dependent ATPase activity and unwinds double-stranded RNA. This chain is ATP-dependent RNA helicase RhlB, found in Vibrio vulnificus (strain YJ016).